The chain runs to 89 residues: Small ribosomal subunit protein uS15 (89 aa).

Residues 1–21 (MAITQERKNQLISEFKTHESD) are compositionally biased toward basic and acidic residues. The tract at residues 1–23 (MAITQERKNQLISEFKTHESDTG) is disordered.

Belongs to the universal ribosomal protein uS15 family. Part of the 30S ribosomal subunit. Forms a bridge to the 50S subunit in the 70S ribosome, contacting the 23S rRNA.

Functionally, one of the primary rRNA binding proteins, it binds directly to 16S rRNA where it helps nucleate assembly of the platform of the 30S subunit by binding and bridging several RNA helices of the 16S rRNA. Forms an intersubunit bridge (bridge B4) with the 23S rRNA of the 50S subunit in the ribosome. The sequence is that of Small ribosomal subunit protein uS15 from Bacillus velezensis (strain DSM 23117 / BGSC 10A6 / LMG 26770 / FZB42) (Bacillus amyloliquefaciens subsp. plantarum).